The primary structure comprises 432 residues: Putative D-alanyl-D-alanine carboxypeptidase (432 aa).

Residues 7–25 (ATVLLTFSLSAFAVEYPVL) traverse the membrane as a helical; Signal-anchor segment.

Belongs to the peptidase S12 family. YfeW subfamily.

Its subcellular location is the cell inner membrane. The enzyme catalyses Preferential cleavage: (Ac)2-L-Lys-D-Ala-|-D-Ala. Also transpeptidation of peptidyl-alanyl moieties that are N-acyl substituents of D-alanine.. The protein is Putative D-alanyl-D-alanine carboxypeptidase of Salmonella choleraesuis (strain SC-B67).